Here is a 281-residue protein sequence, read N- to C-terminus: 2,3,4,5-tetrahydropyridine-2,6-dicarboxylate N-succinyltransferase (281 aa).

Substrate is bound by residues R108 and D145.

Belongs to the transferase hexapeptide repeat family. As to quaternary structure, homotrimer.

Its subcellular location is the cytoplasm. It catalyses the reaction (S)-2,3,4,5-tetrahydrodipicolinate + succinyl-CoA + H2O = (S)-2-succinylamino-6-oxoheptanedioate + CoA. Its pathway is amino-acid biosynthesis; L-lysine biosynthesis via DAP pathway; LL-2,6-diaminopimelate from (S)-tetrahydrodipicolinate (succinylase route): step 1/3. This Rhodopseudomonas palustris (strain ATCC BAA-98 / CGA009) protein is 2,3,4,5-tetrahydropyridine-2,6-dicarboxylate N-succinyltransferase.